The primary structure comprises 632 residues: MSCFYLDLLKIKDPSFMKQLDIQELEALAADIRAFLITSTSKSGGHIGPNLGVVELTIALHYTFNSPNDKFIWDVGHQSYVHKILTGRASQFDTLRQHGGLDGFPKRKESIHDVFETGHSSTSLSAAVGMVIARDIKKEDFYVIPIIGDGALTGGMAFEALNHIGDMGKDMIVILNDNDMSIAPNVGALHNVLGKLRTSNTFQQTKTNIDKLMRKIPTAGEKLADTAEKAKDGIKHLLVEGTFFEELGFMYLGPIDGHNLEDVITNLEIAKRTKGPVLLHIITKKGKGYQPAELDSRGTWHGTGPYKVETGSFIKPAKTVASWSSVISNELMRLAANDERIVAITPAMPVGSKLEKFAKTFPERFFDVGIAEQHATTMAAGLATQAMKPFLAIYSTFLQRAYDQLVHDVCRQKLNVVIGIDRAGLVGADGETHQGIFDISFLNSIPNMIITMPKDEEEARQLMDTAFAYDDGPFAIRYPRGNGPGKELSESSKLIPIGEWETIIQPVDAVILTFGPTLEQALKAAEQLEDLGQRVGVINARFIKPLDEALLHRIFKQKIPILTVEESLLKGGFGASVLEFMEENNYTDVTIHRIGLPDEFIGHGSVPLILESYGISPTGIVLKINEMLAQSE.

Residues His-77 and 118-120 (GHS) contribute to the thiamine diphosphate site. A Mg(2+)-binding site is contributed by Asp-149. Residues 150-151 (GA), Asn-178, Tyr-289, and Glu-372 each bind thiamine diphosphate. Asn-178 is a Mg(2+) binding site.

This sequence belongs to the transketolase family. DXPS subfamily. Homodimer. It depends on Mg(2+) as a cofactor. The cofactor is thiamine diphosphate.

It catalyses the reaction D-glyceraldehyde 3-phosphate + pyruvate + H(+) = 1-deoxy-D-xylulose 5-phosphate + CO2. It participates in metabolic intermediate biosynthesis; 1-deoxy-D-xylulose 5-phosphate biosynthesis; 1-deoxy-D-xylulose 5-phosphate from D-glyceraldehyde 3-phosphate and pyruvate: step 1/1. Functionally, catalyzes the acyloin condensation reaction between C atoms 2 and 3 of pyruvate and glyceraldehyde 3-phosphate to yield 1-deoxy-D-xylulose-5-phosphate (DXP). The chain is 1-deoxy-D-xylulose-5-phosphate synthase from Listeria innocua serovar 6a (strain ATCC BAA-680 / CLIP 11262).